Here is a 139-residue protein sequence, read N- to C-terminus: SPbeta prophage-derived uncharacterized protein YomN (139 aa).

In Bacillus subtilis (strain 168), this protein is SPbeta prophage-derived uncharacterized protein YomN (yomN).